The primary structure comprises 232 residues: Small ribosomal subunit protein uS3 (232 aa).

Residues 39-107 (IRAILHKELK…DVVINIVEIR (69 aa)) enclose the KH type-2 domain.

It belongs to the universal ribosomal protein uS3 family. In terms of assembly, part of the 30S ribosomal subunit. Forms a tight complex with proteins S10 and S14.

In terms of biological role, binds the lower part of the 30S subunit head. Binds mRNA in the 70S ribosome, positioning it for translation. In Rhodopseudomonas palustris (strain BisA53), this protein is Small ribosomal subunit protein uS3.